Consider the following 412-residue polypeptide: Na(+)/H(+) antiporter NhaA 1 (412 aa).

10 helical membrane-spanning segments follow: residues 34-54 (VGGMVLLAAAALALVLANSPA), 75-95 (LTIGEWAKDGLLAIFFFVAGL), 114-134 (LPVVAALGGMVVPAVLAFAIG), 142-162 (AAWAIPVATDIAFALGVLSLT), 183-203 (LGAIVVIAVLFTSGLSVLALL), 234-254 (WIAVHSSGIHATIAGVALGLL), 282-302 (LIVPVFALFAAGVPVDGEALV), 309-329 (VAIAVVVGLVVGKLVGIFGSS), 349-369 (LSALAMLGGVGFTVSLLIAEL), and 379-399 (AKAAVLIASALASLLAAVMLL).

Belongs to the NhaA Na(+)/H(+) (TC 2.A.33) antiporter family.

It localises to the cell membrane. The catalysed reaction is Na(+)(in) + 2 H(+)(out) = Na(+)(out) + 2 H(+)(in). Functionally, na(+)/H(+) antiporter that extrudes sodium in exchange for external protons. This chain is Na(+)/H(+) antiporter NhaA 1, found in Saccharopolyspora erythraea (strain ATCC 11635 / DSM 40517 / JCM 4748 / NBRC 13426 / NCIMB 8594 / NRRL 2338).